A 252-amino-acid polypeptide reads, in one-letter code: MKAVVYNLNGEAVKEIDLPAVFEEEYRPDLIKRAFLSAFTARLQPKGSDPLAGLRTSAKNIGKGHGRARVDRVPQGWAARVPQAVGGRRAHPPKVEKILWERVNKKERIKAIKSAIAATANPELVKERGHVFETENLPIIVESSFEELQKTKDVFAVFEKLGISDDVIRAKNGIKIRAGKGKMRGRKYKKPRSILVVVGDKCNAILASRNLPGVDVITAKDLGIIHLAPGGVAGRLTVWTESALEKLKERFE.

It belongs to the universal ribosomal protein uL4 family. As to quaternary structure, part of the 50S ribosomal subunit.

Functionally, one of the primary rRNA binding proteins, this protein initially binds near the 5'-end of the 23S rRNA. It is important during the early stages of 50S assembly. It makes multiple contacts with different domains of the 23S rRNA in the assembled 50S subunit and ribosome. In terms of biological role, forms part of the polypeptide exit tunnel. The chain is Large ribosomal subunit protein uL4 from Methanocaldococcus jannaschii (strain ATCC 43067 / DSM 2661 / JAL-1 / JCM 10045 / NBRC 100440) (Methanococcus jannaschii).